The sequence spans 153 residues: Hemoglobin-3 (153 aa).

The residue at position 2 (serine 2) is an N-acetylserine. The Globin domain occupies 4-150 (GLTGPQKAAL…ICRVQGDFMK (147 aa)). Histidine 99 lines the heme b pocket.

This sequence belongs to the globin family. In terms of assembly, homotetramer.

It localises to the cytoplasm. This Phacoides pectinatus (Thick lucine) protein is Hemoglobin-3.